We begin with the raw amino-acid sequence, 117 residues long: UPF0295 protein Bsph_0336 (117 aa).

2 helical membrane-spanning segments follow: residues 13 to 33 (SFAL…IFFK) and 37 to 57 (ILVL…TVVY).

This sequence belongs to the UPF0295 family.

The protein localises to the cell membrane. The chain is UPF0295 protein Bsph_0336 from Lysinibacillus sphaericus (strain C3-41).